A 253-amino-acid chain; its full sequence is tRNA uridine(34) hydroxylase (253 aa).

Residues 127–221 (HGRPLVLLDT…YFEDVGGEGY (95 aa)) enclose the Rhodanese domain. C181 serves as the catalytic Cysteine persulfide intermediate.

It belongs to the TrhO family.

The catalysed reaction is uridine(34) in tRNA + AH2 + O2 = 5-hydroxyuridine(34) in tRNA + A + H2O. Its function is as follows. Catalyzes oxygen-dependent 5-hydroxyuridine (ho5U) modification at position 34 in tRNAs. In Xanthomonas campestris pv. campestris (strain B100), this protein is tRNA uridine(34) hydroxylase.